A 554-amino-acid polypeptide reads, in one-letter code: GPI transamidase component PIG-S homolog (554 aa).

At 1-73 the chain is on the cytoplasmic side; the sequence is MSPCKWLTMF…LNKPEKSLKR (73 aa). The helical transmembrane segment at 74–94 threads the bilayer; it reads YALLSFYVIILLAIPVWWKTT. Residues 95–511 are Lumenal-facing; it reads HYERSSLPFE…VTTIYFPDES (417 aa). Asn-132 and Asn-375 each carry an N-linked (GlcNAc...) asparagine glycan. A helical membrane pass occupies residues 512–532; the sequence is KYGIYAPLFAPILIPLLISFI. The Cytoplasmic segment spans residues 533-554; that stretch reads KEVKDMLRERKLHRVANVPKPN.

Belongs to the PIGS family. As to quaternary structure, forms a complex with PIG-T homolog, PIG-U homolog and GPI8.

The protein resides in the endoplasmic reticulum membrane. The protein operates within glycolipid biosynthesis; glycosylphosphatidylinositol-anchor biosynthesis. Its function is as follows. Component of the GPI transamidase complex. Involved in transfer of GPI to proteins. The chain is GPI transamidase component PIG-S homolog (gpi17) from Schizosaccharomyces pombe (strain 972 / ATCC 24843) (Fission yeast).